We begin with the raw amino-acid sequence, 91 residues long: Small nuclear ribonucleoprotein F (91 aa).

One can recognise a Sm domain in the interval Ala8–Glu81.

It belongs to the snRNP Sm proteins family. SmF/LSm6 subfamily. In terms of assembly, core component of the spliceosomal U1, U2, U4 and U5 small nuclear ribonucleoproteins (snRNPs), the building blocks of the spliceosome. Most spliceosomal snRNPs contain a common set of Sm proteins, SNRPB, SNRPD1, SNRPD2, SNRPD3, SNRPE, SNRPF and SNRPG that assemble in a heptameric protein ring on the Sm site of the small nuclear RNA to form the core snRNP. Component of the U1 snRNP. Component of the U4/U6-U5 tri-snRNP complex. Component of the U7 snRNP complex. Component of the U11/U12 snRNPs that are part of the U12-type spliceosome. Part of the SMN-Sm complex that catalyzes core snRNPs assembly.

The protein localises to the cytoplasm. It localises to the cytosol. It is found in the nucleus. In terms of biological role, plays a role in pre-mRNA splicing as a core component of the spliceosomal U1, U2, U4 and U5 small nuclear ribonucleoproteins (snRNPs), the building blocks of the spliceosome. Component of both the pre-catalytic spliceosome B complex and activated spliceosome C complexes. Is also a component of the minor U12 spliceosome. The polypeptide is Small nuclear ribonucleoprotein F (snrpf) (Dictyostelium discoideum (Social amoeba)).